Here is a 398-residue protein sequence, read N- to C-terminus: S-adenosylmethionine synthase (398 aa).

Histidine 19 contacts ATP. Mg(2+) is bound at residue aspartate 21. Glutamate 47 contacts K(+). Residues glutamate 60 and glutamine 103 each coordinate L-methionine. The tract at residues 103-113 (QSPDIAQGVDV) is flexible loop. Residues 177–179 (DGK), 243–244 (RF), aspartate 252, 258–259 (RK), alanine 275, and lysine 279 contribute to the ATP site. Aspartate 252 provides a ligand contact to L-methionine. Lysine 283 provides a ligand contact to L-methionine.

It belongs to the AdoMet synthase family. As to quaternary structure, homotetramer; dimer of dimers. It depends on Mg(2+) as a cofactor. K(+) is required as a cofactor.

It is found in the cytoplasm. The enzyme catalyses L-methionine + ATP + H2O = S-adenosyl-L-methionine + phosphate + diphosphate. Its pathway is amino-acid biosynthesis; S-adenosyl-L-methionine biosynthesis; S-adenosyl-L-methionine from L-methionine: step 1/1. Its function is as follows. Catalyzes the formation of S-adenosylmethionine (AdoMet) from methionine and ATP. The overall synthetic reaction is composed of two sequential steps, AdoMet formation and the subsequent tripolyphosphate hydrolysis which occurs prior to release of AdoMet from the enzyme. The chain is S-adenosylmethionine synthase from Symbiobacterium thermophilum (strain DSM 24528 / JCM 14929 / IAM 14863 / T).